The chain runs to 343 residues: Probable transposase for insertion sequence element (343 aa).

This sequence belongs to the transposase mutator family.

Required for the transposition of the insertion element. The protein is Probable transposase for insertion sequence element of Corynebacterium diphtheriae.